A 55-amino-acid chain; its full sequence is Large ribosomal subunit protein bL33 (55 aa).

It belongs to the bacterial ribosomal protein bL33 family.

This Pseudarthrobacter chlorophenolicus (strain ATCC 700700 / DSM 12829 / CIP 107037 / JCM 12360 / KCTC 9906 / NCIMB 13794 / A6) (Arthrobacter chlorophenolicus) protein is Large ribosomal subunit protein bL33.